Here is a 248-residue protein sequence, read N- to C-terminus: Triosephosphate isomerase (248 aa).

Positions 12 and 14 each coordinate substrate. Lys-14 bears the N6-acetyllysine mark. Tyr-68 is subject to 3'-nitrotyrosine. Catalysis depends on His-96, which acts as the Electrophile. Ser-106 carries the post-translational modification Phosphoserine. Lys-142 is covalently cross-linked (Glycyl lysine isopeptide (Lys-Gly) (interchain with G-Cter in SUMO1)). Position 149 is an N6-succinyllysine (Lys-149). Lys-156 carries the post-translational modification N6-acetyllysine; alternate. N6-succinyllysine; alternate is present on Lys-156. Glu-166 functions as the Proton acceptor in the catalytic mechanism. Thr-173 is subject to Phosphothreonine. The residue at position 194 (Lys-194) is an N6-acetyllysine; alternate. Lys-194 carries the post-translational modification N6-succinyllysine; alternate. Residue Lys-194 is modified to N6-methyllysine; alternate. Tyr-209 carries the post-translational modification 3'-nitrotyrosine. Ser-212 carries the post-translational modification Phosphoserine. Thr-214 carries the phosphothreonine modification. Ser-223 is modified (phosphoserine). Lys-238 carries the post-translational modification N6-acetyllysine.

The protein belongs to the triosephosphate isomerase family. As to quaternary structure, homodimer.

It localises to the cytoplasm. It carries out the reaction dihydroxyacetone phosphate = methylglyoxal + phosphate. It catalyses the reaction D-glyceraldehyde 3-phosphate = dihydroxyacetone phosphate. It functions in the pathway carbohydrate degradation; glycolysis; D-glyceraldehyde 3-phosphate from glycerone phosphate: step 1/1. It participates in carbohydrate biosynthesis; gluconeogenesis. Functionally, triosephosphate isomerase is an extremely efficient metabolic enzyme that catalyzes the interconversion between dihydroxyacetone phosphate (DHAP) and D-glyceraldehyde-3-phosphate (G3P) in glycolysis and gluconeogenesis. Its function is as follows. It is also responsible for the non-negligible production of methylglyoxal a reactive cytotoxic side-product that modifies and can alter proteins, DNA and lipids. The sequence is that of Triosephosphate isomerase (TPI1) from Sus scrofa (Pig).